A 116-amino-acid chain; its full sequence is Large ribosomal subunit protein bL20 (116 aa).

The protein belongs to the bacterial ribosomal protein bL20 family.

Binds directly to 23S ribosomal RNA and is necessary for the in vitro assembly process of the 50S ribosomal subunit. It is not involved in the protein synthesizing functions of that subunit. The sequence is that of Large ribosomal subunit protein bL20 from Thermosynechococcus vestitus (strain NIES-2133 / IAM M-273 / BP-1).